Consider the following 414-residue polypeptide: Adenylosuccinate synthetase (414 aa).

GTP-binding positions include 12–18 and 40–42; these read GDEGKGK and GHT. Residue D13 is the Proton acceptor of the active site. Mg(2+)-binding residues include D13 and G40. Residues 13 to 16, 38 to 41, T124, R138, Q216, T231, and R297 each bind IMP; these read DEGK and NAGH. Catalysis depends on H41, which acts as the Proton donor. Residue 293–299 coordinates substrate; that stretch reads STTGRPR. Residues R299, 325–327, and 403–405 each bind GTP; these read KLD and STG.

Belongs to the adenylosuccinate synthetase family. As to quaternary structure, homodimer. Mg(2+) is required as a cofactor.

It localises to the cytoplasm. It carries out the reaction IMP + L-aspartate + GTP = N(6)-(1,2-dicarboxyethyl)-AMP + GDP + phosphate + 2 H(+). It participates in purine metabolism; AMP biosynthesis via de novo pathway; AMP from IMP: step 1/2. In terms of biological role, plays an important role in the de novo pathway of purine nucleotide biosynthesis. Catalyzes the first committed step in the biosynthesis of AMP from IMP. The chain is Adenylosuccinate synthetase from Hydrogenobaculum sp. (strain Y04AAS1).